The primary structure comprises 453 residues: GTPase Der (453 aa).

2 EngA-type G domains span residues 4–169 (PIVA…PTQG) and 177–352 (TKIA…NEYQ). Residues 10-17 (GRPNVGKS), 57-61 (DTGGL), 120-123 (NKCE), 183-190 (GRPNVGKS), 230-234 (DTAGI), and 295-298 (NKWD) contribute to the GTP site. In terms of domain architecture, KH-like spans 353 to 438 (RRVTTSVINE…PIRLLWRGKK (86 aa)).

Belongs to the TRAFAC class TrmE-Era-EngA-EngB-Septin-like GTPase superfamily. EngA (Der) GTPase family. In terms of assembly, associates with the 50S ribosomal subunit.

Its function is as follows. GTPase that plays an essential role in the late steps of ribosome biogenesis. The sequence is that of GTPase Der from Trichodesmium erythraeum (strain IMS101).